A 413-amino-acid polypeptide reads, in one-letter code: Multifunctional CCA protein (413 aa).

Residues Gly8 and Arg11 each contribute to the ATP site. Positions 8 and 11 each coordinate CTP. Positions 21 and 23 each coordinate Mg(2+). Arg91, Arg143, and Arg146 together coordinate ATP. The CTP site is built by Arg91, Arg143, and Arg146. Residues 232 to 333 (TGVHVMMVID…VRLLERADAL (102 aa)) form the HD domain.

The protein belongs to the tRNA nucleotidyltransferase/poly(A) polymerase family. Bacterial CCA-adding enzyme type 1 subfamily. In terms of assembly, monomer. Can also form homodimers and oligomers. Requires Mg(2+) as cofactor. It depends on Ni(2+) as a cofactor.

It carries out the reaction a tRNA precursor + 2 CTP + ATP = a tRNA with a 3' CCA end + 3 diphosphate. The catalysed reaction is a tRNA with a 3' CCA end + 2 CTP + ATP = a tRNA with a 3' CCACCA end + 3 diphosphate. Catalyzes the addition and repair of the essential 3'-terminal CCA sequence in tRNAs without using a nucleic acid template. Adds these three nucleotides in the order of C, C, and A to the tRNA nucleotide-73, using CTP and ATP as substrates and producing inorganic pyrophosphate. tRNA 3'-terminal CCA addition is required both for tRNA processing and repair. Also involved in tRNA surveillance by mediating tandem CCA addition to generate a CCACCA at the 3' terminus of unstable tRNAs. While stable tRNAs receive only 3'-terminal CCA, unstable tRNAs are marked with CCACCA and rapidly degraded. This Burkholderia mallei (strain NCTC 10247) protein is Multifunctional CCA protein.